We begin with the raw amino-acid sequence, 553 residues long: Copine-9 (553 aa).

C2 domains lie at 1–125 (MSLG…ERTL) and 132–255 (KCGT…FTVY). Residue Asn95 is glycosylated (N-linked (GlcNAc...) asparagine). Ca(2+) contacts are provided by Asp163, Asp169, Asp225, Asp227, and Asp233. Positions 299-500 (NFTVAIDFTA…VQFVPFRDYV (202 aa)) constitute a VWFA domain. Residues 531-553 (TRDIQPRPPPPANPSPIPAPEQP) form a disordered region. Positions 536-553 (PRPPPPANPSPIPAPEQP) are enriched in pro residues.

Belongs to the copine family. It depends on Ca(2+) as a cofactor. As to expression, expressed in melanocytes.

Probable calcium-dependent phospholipid-binding protein that may play a role in calcium-mediated intracellular processes. Plays a role in dendrite formation by melanocytes. This is Copine-9 from Homo sapiens (Human).